Here is a 371-residue protein sequence, read N- to C-terminus: 4-hydroxyphenylpyruvate dioxygenase-like protein (371 aa).

2 VOC domains span residues 7 to 135 (RLCH…LLER) and 160 to 328 (RVDH…VFTK). Fe cation contacts are provided by His-163, His-258, and Glu-339.

The protein belongs to the 4HPPD family. The cofactor is Fe cation.

The protein resides in the mitochondrion. The enzyme catalyses 3-(4-hydroxyphenyl)pyruvate + O2 = (S)-4-hydroxymandelate + CO2. Functionally, iron-dependent dioxygenase that catalyzes the conversion of 4-hydroxyphenylpyruvate (4-HPPA) to 4-hydroxymandelate (4-HMA) in the mitochondria, one of the steps in the biosynthesis of coenzyme Q10 from tyrosine. This Homo sapiens (Human) protein is 4-hydroxyphenylpyruvate dioxygenase-like protein.